A 200-amino-acid chain; its full sequence is TATA-box-binding protein 2 (200 aa).

2 tandem repeats follow at residues 25 to 101 and 115 to 192.

It belongs to the TBP family. In terms of assembly, belongs to the TFIID complex together with the TBP-associated factors (TAFs). Binds DNA as monomer.

Its subcellular location is the nucleus. Functionally, general transcription factor that functions at the core of the DNA-binding multiprotein factor TFIID. Binding of TFIID to the TATA box is the initial transcriptional step of the pre-initiation complex (PIC), playing a role in the activation of eukaryotic genes transcribed by RNA polymerase II. In Zea mays (Maize), this protein is TATA-box-binding protein 2 (TBP2).